The sequence spans 1178 residues: DNA-directed RNA polymerase I subunit 2 (1178 aa).

A C4-type zinc finger spans residues 1097-1137; the sequence is CSLCGSLLTSSVVNVQQKKLIQEIGKLPPGRTPKKVTCYSC.

The protein belongs to the RNA polymerase beta chain family. As to quaternary structure, component of the RNA polymerase I (Pol I) complex consisting of at least 13 subunits.

The protein resides in the nucleus. The catalysed reaction is RNA(n) + a ribonucleoside 5'-triphosphate = RNA(n+1) + diphosphate. DNA-dependent RNA polymerase catalyzes the transcription of DNA into RNA using the four ribonucleoside triphosphates as substrates. Second largest core component of RNA polymerase I which synthesizes ribosomal RNA precursors. Proposed to contribute to the polymerase catalytic activity and forms the polymerase active center together with the largest subunit. Pol I is composed of mobile elements and NRPA2 is part of the core element with the central large cleft and probably a clamp element that moves to open and close the cleft. In terms of biological role, essential for the completion of the three rounds of mitosis in female megaspores required for the development of mature gametophytes. In Arabidopsis thaliana (Mouse-ear cress), this protein is DNA-directed RNA polymerase I subunit 2.